A 297-amino-acid chain; its full sequence is Golgi-associated RAB2 interactor protein 1A (297 aa).

Residues 226–257 (SNRHQTSRDRHTDTATETDNSGNCKSTPLVAS) are disordered. Positions 240–257 (ATETDNSGNCKSTPLVAS) are enriched in polar residues.

Belongs to the GARIN family. As to quaternary structure, interacts (via N-terminus) with RAB2B (in GTP-bound form). As to expression, expressed in testis (at protein level).

The protein resides in the golgi apparatus. RAB2B effector protein required for accurate acrosome formation and normal male fertility. The sequence is that of Golgi-associated RAB2 interactor protein 1A from Mus musculus (Mouse).